The chain runs to 210 residues: Probable GTP-binding protein EngB (210 aa).

The 175-residue stretch at 25–199 (TGIEVAFAGR…RQKLDTWFNE (175 aa)) folds into the EngB-type G domain. GTP contacts are provided by residues 33–40 (GRSNAGKS), 60–64 (GRTQL), 78–81 (DLPG), 145–148 (TKAD), and 178–180 (FSS). Ser-40 and Thr-62 together coordinate Mg(2+).

It belongs to the TRAFAC class TrmE-Era-EngA-EngB-Septin-like GTPase superfamily. EngB GTPase family. Mg(2+) is required as a cofactor.

Its function is as follows. Necessary for normal cell division and for the maintenance of normal septation. The chain is Probable GTP-binding protein EngB from Escherichia coli O157:H7.